Consider the following 1216-residue polypeptide: 1-phosphatidylinositol 4,5-bisphosphate phosphodiesterase beta-1 (1216 aa).

Cys17 is lipidated: S-palmitoyl cysteine. Ser236 is subject to Phosphoserine. Residues 316-467 (EDMSQPLSHY…LMYKILVKNK (152 aa)) form the PI-PLC X-box domain. Catalysis depends on residues His331 and His378. A Phosphoserine modification is found at Ser417. The tract at residues 469–534 (KSHKSSEGSG…MDEGTAGSEA (66 aa)) is disordered. Residues 472–483 (KSSEGSGKKKLS) show a composition bias toward basic and acidic residues. A compositionally biased stretch (low complexity) spans 491-501 (SDSSSVFEPSS). Residues 507-518 (ADTESDDDDDDD) are compositionally biased toward acidic residues. Thr509 bears the Phosphothreonine mark. 2 positions are modified to phosphoserine: Ser511 and Ser582. The region spanning 540-656 (MSNLVNYIQP…GYRLKPEFMR (117 aa)) is the PI-PLC Y-box domain. The C2 domain occupies 656–784 (RRPDKHFDPF…CLRNERNQPL (129 aa)). Disordered stretches follow at residues 834–891 (DEEE…VKAP), 933–993 (LVKR…IEQD), 1071–1095 (KMDKKRQEKITEAKSKDKSQMEEEK), and 1172–1216 (KISE…DTPL). The residue at position 887 (Ser887) is a Phosphoserine; by PKC. 2 stretches are compositionally biased toward basic and acidic residues: residues 941-951 (TTDLIKEHTTK) and 959-979 (YLRRRAALEKTAKKDNKKKSE). Ser978 and Ser987 each carry phosphoserine. Residues 980–991 (PSSPDHVSSTIE) show a composition bias toward polar residues. The segment covering 1075–1095 (KRQEKITEAKSKDKSQMEEEK) has biased composition (basic and acidic residues). A compositionally biased stretch (polar residues) spans 1187–1198 (TSDSGKLNQKPP). Phosphoserine is present on residues Ser1199 and Ser1200. Over residues 1207–1216 (NPGKEFDTPL) the composition is skewed to basic and acidic residues.

Interacts with DGKQ. Ca(2+) is required as a cofactor. Palmitoylated. Palmitoylation at Cys-17 by ZDHHC21 regulates the signaling activity of PLCB1 and the function of the endothelial barrier. Palmitoylation by ZDHHC21 is stimulated by inflammation.

It localises to the nucleus membrane. The protein localises to the cytoplasm. The enzyme catalyses a 1,2-diacyl-sn-glycero-3-phospho-(1D-myo-inositol-4,5-bisphosphate) + H2O = 1D-myo-inositol 1,4,5-trisphosphate + a 1,2-diacyl-sn-glycerol + H(+). It catalyses the reaction a 1,2-diacyl-sn-glycero-3-phospho-(1D-myo-inositol) + H2O = 1D-myo-inositol 1-phosphate + a 1,2-diacyl-sn-glycerol + H(+). Its function is as follows. Catalyzes the hydrolysis of 1-phosphatidylinositol 4,5-bisphosphate into diacylglycerol (DAG) and inositol 1,4,5-trisphosphate (IP3) and mediates intracellular signaling downstream of G protein-coupled receptors. Regulates the function of the endothelial barrier. The polypeptide is 1-phosphatidylinositol 4,5-bisphosphate phosphodiesterase beta-1 (PLCB1) (Bos taurus (Bovine)).